The following is a 275-amino-acid chain: Tryptophan synthase alpha chain (275 aa).

Active-site proton acceptor residues include Glu49 and Asp60.

It belongs to the TrpA family. Tetramer of two alpha and two beta chains.

The enzyme catalyses (1S,2R)-1-C-(indol-3-yl)glycerol 3-phosphate + L-serine = D-glyceraldehyde 3-phosphate + L-tryptophan + H2O. It functions in the pathway amino-acid biosynthesis; L-tryptophan biosynthesis; L-tryptophan from chorismate: step 5/5. Functionally, the alpha subunit is responsible for the aldol cleavage of indoleglycerol phosphate to indole and glyceraldehyde 3-phosphate. The chain is Tryptophan synthase alpha chain from Nitrosomonas europaea (strain ATCC 19718 / CIP 103999 / KCTC 2705 / NBRC 14298).